The chain runs to 238 residues: Citrate-binding protein (238 aa).

Residues 1–31 (MKMKRSPYCFCCSFALLLLVSFLKDRHFCSA) form the signal peptide. Residues 225–238 (LEGCNNNHGTWLVQ) constitute a propeptide, removed in mature form.

It localises to the vacuole. In terms of biological role, may be a subunit of a vacuolar malate and citrate transporter. The sequence is that of Citrate-binding protein (CBP) from Hevea brasiliensis (Para rubber tree).